Here is an 86-residue protein sequence, read N- to C-terminus: Kappa-theraphotoxin-Cg1c (86 aa).

Positions 1–21 are cleaved as a signal peptide; that stretch reads MKVSVLITLAVLGVMFVWASA. Positions 22 to 50 are excised as a propeptide; it reads AELEERGSDHRDSPAWLKSMERIFQSEER. Intrachain disulfides connect Cys-52/Cys-66, Cys-59/Cys-71, and Cys-65/Cys-78.

The protein belongs to the neurotoxin 10 (Hwtx-1) family. 28 (Jztx-11) subfamily. Expressed by the venom gland.

It is found in the secreted. Functionally, probable ion channel inhibitor. The sequence is that of Kappa-theraphotoxin-Cg1c from Chilobrachys guangxiensis (Chinese earth tiger tarantula).